The sequence spans 85 residues: Arminin 2b (85 aa).

The first 18 residues, 1–18, serve as a signal peptide directing secretion; it reads MKTVFAILFLAFIALTYA. Positions 19–57 are excised as a propeptide; it reads RSYEDVKEEIKNEIEKEILEDLEEESDELNDKSKEINDA. Ala82 is modified (alanine amide).

It belongs to the arminin family. As to expression, expressed in entodermal epithelium along the body column.

Its subcellular location is the secreted. The protein localises to the target cell membrane. Antimicrobial peptide with a broad-spectrum antimicrobial activity. Keeps its antibacterial activity under a wide range of salt concentrations that mimic physiological conditions of human blood, which is surprising, since Hydra is an obligate freshwater animal with nearly no salt tolerance. Does not affect red blood cells. In Hydra vulgaris (Hydra), this protein is Arminin 2b.